Here is a 338-residue protein sequence, read N- to C-terminus: UDP-3-O-acylglucosamine N-acyltransferase (338 aa).

His-239 functions as the Proton acceptor in the catalytic mechanism.

The protein belongs to the transferase hexapeptide repeat family. LpxD subfamily. Homotrimer.

The catalysed reaction is a UDP-3-O-[(3R)-3-hydroxyacyl]-alpha-D-glucosamine + a (3R)-hydroxyacyl-[ACP] = a UDP-2-N,3-O-bis[(3R)-3-hydroxyacyl]-alpha-D-glucosamine + holo-[ACP] + H(+). It functions in the pathway bacterial outer membrane biogenesis; LPS lipid A biosynthesis. Its function is as follows. Catalyzes the N-acylation of UDP-3-O-acylglucosamine using 3-hydroxyacyl-ACP as the acyl donor. Is involved in the biosynthesis of lipid A, a phosphorylated glycolipid that anchors the lipopolysaccharide to the outer membrane of the cell. This is UDP-3-O-acylglucosamine N-acyltransferase from Xylella fastidiosa (strain 9a5c).